The following is a 145-amino-acid chain: Deoxyuridine 5'-triphosphate nucleotidohydrolase (145 aa).

Substrate contacts are provided by residues 62 to 64 (RSG), asparagine 75, and 79 to 81 (TVD).

It belongs to the dUTPase family. Mg(2+) serves as cofactor.

The catalysed reaction is dUTP + H2O = dUMP + diphosphate + H(+). It functions in the pathway pyrimidine metabolism; dUMP biosynthesis; dUMP from dCTP (dUTP route): step 2/2. Functionally, this enzyme is involved in nucleotide metabolism: it produces dUMP, the immediate precursor of thymidine nucleotides and it decreases the intracellular concentration of dUTP so that uracil cannot be incorporated into DNA. This chain is Deoxyuridine 5'-triphosphate nucleotidohydrolase, found in Gloeothece citriformis (strain PCC 7424) (Cyanothece sp. (strain PCC 7424)).